Here is a 354-residue protein sequence, read N- to C-terminus: DNA integrity scanning protein DisA (354 aa).

Residues 6 to 144 (GMKIKDTLKI…GDIKYVLRDS (139 aa)) enclose the DAC domain. ATP-binding positions include Gly73, Leu91, and 104-108 (TRHRT).

This sequence belongs to the DisA family. In terms of assembly, homooctamer. Mg(2+) serves as cofactor.

It catalyses the reaction 2 ATP = 3',3'-c-di-AMP + 2 diphosphate. Its function is as follows. Participates in a DNA-damage check-point that is active prior to asymmetric division when DNA is damaged. DisA forms globular foci that rapidly scan along the chromosomes during sporulation, searching for lesions. When a lesion is present, DisA pauses at the lesion site. This triggers a cellular response that culminates in a temporary block in sporulation initiation. Functionally, also has diadenylate cyclase activity, catalyzing the condensation of 2 ATP molecules into cyclic di-AMP (c-di-AMP). c-di-AMP acts as a signaling molecule that couples DNA integrity with progression of sporulation. The rise in c-di-AMP level generated by DisA while scanning the chromosome, operates as a positive signal that advances sporulation; upon encountering a lesion, the DisA focus arrests at the damaged site and halts c-di-AMP synthesis. The protein is DNA integrity scanning protein DisA of Clostridium botulinum (strain Alaska E43 / Type E3).